Here is a 483-residue protein sequence, read N- to C-terminus: Aspartyl/glutamyl-tRNA(Asn/Gln) amidotransferase subunit B (483 aa).

The protein belongs to the GatB/GatE family. GatB subfamily. As to quaternary structure, heterotrimer of A, B and C subunits.

The catalysed reaction is L-glutamyl-tRNA(Gln) + L-glutamine + ATP + H2O = L-glutaminyl-tRNA(Gln) + L-glutamate + ADP + phosphate + H(+). It catalyses the reaction L-aspartyl-tRNA(Asn) + L-glutamine + ATP + H2O = L-asparaginyl-tRNA(Asn) + L-glutamate + ADP + phosphate + 2 H(+). Allows the formation of correctly charged Asn-tRNA(Asn) or Gln-tRNA(Gln) through the transamidation of misacylated Asp-tRNA(Asn) or Glu-tRNA(Gln) in organisms which lack either or both of asparaginyl-tRNA or glutaminyl-tRNA synthetases. The reaction takes place in the presence of glutamine and ATP through an activated phospho-Asp-tRNA(Asn) or phospho-Glu-tRNA(Gln). This Marinobacter nauticus (strain ATCC 700491 / DSM 11845 / VT8) (Marinobacter aquaeolei) protein is Aspartyl/glutamyl-tRNA(Asn/Gln) amidotransferase subunit B.